A 412-amino-acid polypeptide reads, in one-letter code: Isocitrate dehydrogenase [NADP] cytoplasmic (412 aa).

Residues 76–78 (TIT) and R83 contribute to the NADP(+) site. T78 lines the substrate pocket. Substrate-binding positions include 95-101 (SPNGTIR), R110, and R133. D253 contacts Mn(2+). K261 provides a ligand contact to NADP(+). D276 contributes to the Mn(2+) binding site. Residues 309 to 314 (GTVTRH) and N327 each bind NADP(+).

The protein belongs to the isocitrate and isopropylmalate dehydrogenases family. In terms of assembly, homodimer. Mg(2+) serves as cofactor. It depends on Mn(2+) as a cofactor.

It is found in the cytoplasm. It carries out the reaction D-threo-isocitrate + NADP(+) = 2-oxoglutarate + CO2 + NADPH. The chain is Isocitrate dehydrogenase [NADP] cytoplasmic (idhC) from Dictyostelium discoideum (Social amoeba).